The sequence spans 276 residues: Aldo-keto reductase Mjls_1919 (276 aa).

The active-site Proton donor is Tyr50. 8 residues coordinate NADPH: Leu190, Ile228, Lys230, Ser231, Val232, Arg236, Ser239, and Asn240.

Belongs to the aldo/keto reductase family.

The sequence is that of Aldo-keto reductase Mjls_1919 from Mycobacterium sp. (strain JLS).